The primary structure comprises 364 residues: MKEKTLPKYLQLKQEILSWIISGQMKPDEKIPTEHEIANQFQLSRHTVRQALGELEKEGWLYKIQGSGTFVSRPKPKEQVDTKTIGIVTTYISDYIFPHIVRGAEETLREKGYRLLLASTNNDKQREKEQLEEMIREPLSGLIIEPTKSAQGNPNMGYYLSLNNLHIPYVMINARYLEVSCPCVKMDDEQGGFLLTDHLIRLGHRRIAGFFKTDDLQGVDRLRGFIRAHQQHEVPVATEYLLSYATEEKWTKPLEVAREFLQRPKEERPTAFVCYNDELAILLLEVIRQQGLSVPDDISIVGFDDFTFATATEVKLTTIRHPKTEMGVQAAEMLIQMIEQRSVDKIGDIIYRPELIVRNSTKEI.

The 69-residue stretch at 6-74 folds into the HTH gntR-type domain; sequence LPKYLQLKQE…QGSGTFVSRP (69 aa). The segment at residues 34–53 is a DNA-binding region (H-T-H motif); the sequence is EHEIANQFQLSRHTVRQALG.

It is found in the cytoplasm. Its function is as follows. Transcriptional repressor of the arabinose utilization genes. The polypeptide is Arabinose metabolism transcriptional repressor (araR) (Geobacillus stearothermophilus (Bacillus stearothermophilus)).